Consider the following 406-residue polypeptide: CinA-like protein (406 aa).

This sequence belongs to the CinA family.

This Thermomicrobium roseum (strain ATCC 27502 / DSM 5159 / P-2) protein is CinA-like protein.